We begin with the raw amino-acid sequence, 37 residues long: Large ribosomal subunit protein bL36 (37 aa).

The protein belongs to the bacterial ribosomal protein bL36 family.

This Bacillus pumilus (strain SAFR-032) protein is Large ribosomal subunit protein bL36.